Here is a 38-residue protein sequence, read N- to C-terminus: Toxin BmK NSPK (38 aa).

Disulfide bonds link cysteine 7/cysteine 27, cysteine 13/cysteine 32, and cysteine 17/cysteine 34.

Expressed by the venom gland.

It is found in the secreted. Its function is as follows. Blocks voltage-gated potassium (Kv) channel and augments neurite extension via NGF/TrkA signaling pathway. This is Toxin BmK NSPK from Olivierus martensii (Manchurian scorpion).